The primary structure comprises 302 residues: uncharacterized protein (302 aa).

Functionally, may be a membrane-bound protein, possibly involved in IAA or IAA-Lysine transport. This is an uncharacterized protein from Pseudomonas savastanoi (Pseudomonas syringae pv. savastanoi).